The following is a 281-amino-acid chain: Digeranylgeranylglyceryl phosphate synthase (281 aa).

The next 7 helical transmembrane spans lie at 14 to 34 (AMAA…LSSA), 38 to 58 (VSLS…VTGA), 95 to 115 (LFLF…CGII), 149 to 169 (FLFG…VLFL), 207 to 227 (ASYI…VPYL), 235 to 255 (YLFV…QILG), and 259 to 279 (AARS…SFIV).

This sequence belongs to the UbiA prenyltransferase family. DGGGP synthase subfamily. The cofactor is Mg(2+).

The protein resides in the cell membrane. It carries out the reaction sn-3-O-(geranylgeranyl)glycerol 1-phosphate + (2E,6E,10E)-geranylgeranyl diphosphate = 2,3-bis-O-(geranylgeranyl)-sn-glycerol 1-phosphate + diphosphate. The protein operates within membrane lipid metabolism; glycerophospholipid metabolism. Prenyltransferase that catalyzes the transfer of the geranylgeranyl moiety of geranylgeranyl diphosphate (GGPP) to the C2 hydroxyl of (S)-3-O-geranylgeranylglyceryl phosphate (GGGP). This reaction is the second ether-bond-formation step in the biosynthesis of archaeal membrane lipids. The chain is Digeranylgeranylglyceryl phosphate synthase from Methanococcoides burtonii (strain DSM 6242 / NBRC 107633 / OCM 468 / ACE-M).